Consider the following 291-residue polypeptide: ATP synthase gamma chain (291 aa).

It belongs to the ATPase gamma chain family. F-type ATPases have 2 components, CF(1) - the catalytic core - and CF(0) - the membrane proton channel. CF(1) has five subunits: alpha(3), beta(3), gamma(1), delta(1), epsilon(1). CF(0) has three main subunits: a, b and c.

Its subcellular location is the cell inner membrane. Produces ATP from ADP in the presence of a proton gradient across the membrane. The gamma chain is believed to be important in regulating ATPase activity and the flow of protons through the CF(0) complex. The protein is ATP synthase gamma chain of Ruegeria pomeroyi (strain ATCC 700808 / DSM 15171 / DSS-3) (Silicibacter pomeroyi).